Consider the following 184-residue polypeptide: H(2)/formate:CoB-CoM heterodisulfide,ferredoxin reductase subunit C2 (184 aa).

4Fe-4S ferredoxin-type domains are found at residues 24-54 (GEKE…AYRT) and 65-97 (IDSV…TEII). Residues C34, C37, C40, C44, C77, C80, C83, and C87 each contribute to the [4Fe-4S] cluster site.

The protein belongs to the HdrC family. The heterodisulfide reductase is composed of three subunits; HdrA, HdrB and HdrC. B1 and B2 subunits are interchangeable, as are the C1 and C2 subunits. The heterodisulfide reductase forms a supercomplex with formylmethanofuran dehydrogenase (Fwd), F(420)-non-reducing hydrogenase (Vhu) and formate dehydrogenase (Fdh). [4Fe-4S] cluster is required as a cofactor.

The enzyme catalyses coenzyme B + coenzyme M + 2 reduced [2Fe-2S]-[ferredoxin] + 2 H(+) = coenzyme M-coenzyme B heterodisulfide + 2 H2 + 2 oxidized [2Fe-2S]-[ferredoxin]. It catalyses the reaction coenzyme B + coenzyme M + 2 reduced [2Fe-2S]-[ferredoxin] + 2 CO2 = coenzyme M-coenzyme B heterodisulfide + 2 formate + 2 oxidized [2Fe-2S]-[ferredoxin]. The protein operates within cofactor metabolism; coenzyme M-coenzyme B heterodisulfide reduction; coenzyme B and coenzyme M from coenzyme M-coenzyme B heterodisulfide: step 1/1. Functionally, part of a complex that catalyzes the reversible reduction of CoM-S-S-CoB to the thiol-coenzymes H-S-CoM (coenzyme M) and H-S-CoB (coenzyme B). This is H(2)/formate:CoB-CoM heterodisulfide,ferredoxin reductase subunit C2 from Methanococcus maripaludis (strain DSM 14266 / JCM 13030 / NBRC 101832 / S2 / LL).